A 201-amino-acid polypeptide reads, in one-letter code: UPF0301 protein RHE_CH00966 (201 aa).

This sequence belongs to the UPF0301 (AlgH) family.

The chain is UPF0301 protein RHE_CH00966 from Rhizobium etli (strain ATCC 51251 / DSM 11541 / JCM 21823 / NBRC 15573 / CFN 42).